The following is a 1363-amino-acid chain: DNA-directed RNA polymerase subunit beta (1363 aa).

It belongs to the RNA polymerase beta chain family. The RNAP catalytic core consists of 2 alpha, 1 beta, 1 beta' and 1 omega subunit. When a sigma factor is associated with the core the holoenzyme is formed, which can initiate transcription.

The catalysed reaction is RNA(n) + a ribonucleoside 5'-triphosphate = RNA(n+1) + diphosphate. Its function is as follows. DNA-dependent RNA polymerase catalyzes the transcription of DNA into RNA using the four ribonucleoside triphosphates as substrates. This chain is DNA-directed RNA polymerase subunit beta, found in Syntrophus aciditrophicus (strain SB).